We begin with the raw amino-acid sequence, 1179 residues long: DNA-directed RNA polymerase subunit beta (1179 aa).

Over residues 1153–1162 the composition is skewed to acidic residues; sequence MREMEDEDEG. Positions 1153–1179 are disordered; that stretch reads MREMEDEDEGNGEKLNLVLEGGSLNEE.

Belongs to the RNA polymerase beta chain family. The RNAP catalytic core consists of 2 alpha, 1 beta, 1 beta' and 1 omega subunit. When a sigma factor is associated with the core the holoenzyme is formed, which can initiate transcription.

The catalysed reaction is RNA(n) + a ribonucleoside 5'-triphosphate = RNA(n+1) + diphosphate. In terms of biological role, DNA-dependent RNA polymerase catalyzes the transcription of DNA into RNA using the four ribonucleoside triphosphates as substrates. The sequence is that of DNA-directed RNA polymerase subunit beta from Brevibacillus brevis (strain 47 / JCM 6285 / NBRC 100599).